Reading from the N-terminus, the 224-residue chain is Probable Brix domain-containing ribosomal biogenesis protein (224 aa).

Residues 1–196 form the Brix domain; sequence MMLITTSHRP…IWIMEDGRRW (196 aa).

In terms of biological role, probably involved in the biogenesis of the ribosome. This Pyrococcus horikoshii (strain ATCC 700860 / DSM 12428 / JCM 9974 / NBRC 100139 / OT-3) protein is Probable Brix domain-containing ribosomal biogenesis protein.